We begin with the raw amino-acid sequence, 430 residues long: Glutamate-1-semialdehyde 2,1-aminomutase (430 aa).

The residue at position 267 (lysine 267) is an N6-(pyridoxal phosphate)lysine.

Belongs to the class-III pyridoxal-phosphate-dependent aminotransferase family. HemL subfamily. In terms of assembly, homodimer. It depends on pyridoxal 5'-phosphate as a cofactor.

The protein resides in the cytoplasm. It catalyses the reaction (S)-4-amino-5-oxopentanoate = 5-aminolevulinate. Its pathway is porphyrin-containing compound metabolism; protoporphyrin-IX biosynthesis; 5-aminolevulinate from L-glutamyl-tRNA(Glu): step 2/2. The protein is Glutamate-1-semialdehyde 2,1-aminomutase of Thermomicrobium roseum (strain ATCC 27502 / DSM 5159 / P-2).